The chain runs to 575 residues: Arginine--tRNA ligase (575 aa).

The 'HIGH' region motif lies at 131-141 (ANPTGPLHVGH).

It belongs to the class-I aminoacyl-tRNA synthetase family. In terms of assembly, monomer.

It localises to the cytoplasm. The catalysed reaction is tRNA(Arg) + L-arginine + ATP = L-arginyl-tRNA(Arg) + AMP + diphosphate. This is Arginine--tRNA ligase from Jannaschia sp. (strain CCS1).